The sequence spans 168 residues: HTH-type transcriptional regulator IscR (168 aa).

One can recognise an HTH rrf2-type domain in the interval 2–131; the sequence is KLTSKGRYAV…DGISLGELMV (130 aa). A DNA-binding region (H-T-H motif) is located at residues 28-51; that stretch reads LADISERQGISLSYLEQLFSKLRK. [2Fe-2S] cluster is bound by residues cysteine 92, cysteine 98, and cysteine 104.

The cofactor is [2Fe-2S] cluster.

Its function is as follows. Regulates the transcription of several operons and genes involved in the biogenesis of Fe-S clusters and Fe-S-containing proteins. The polypeptide is HTH-type transcriptional regulator IscR (Aliivibrio salmonicida (strain LFI1238) (Vibrio salmonicida (strain LFI1238))).